The primary structure comprises 131 residues: Holo-[acyl-carrier-protein] synthase (131 aa).

Asp6 and Glu55 together coordinate Mg(2+).

It belongs to the P-Pant transferase superfamily. AcpS family. Mg(2+) serves as cofactor.

It localises to the cytoplasm. The enzyme catalyses apo-[ACP] + CoA = holo-[ACP] + adenosine 3',5'-bisphosphate + H(+). Its function is as follows. Transfers the 4'-phosphopantetheine moiety from coenzyme A to a Ser of acyl-carrier-protein. This is Holo-[acyl-carrier-protein] synthase from Verminephrobacter eiseniae (strain EF01-2).